The chain runs to 226 residues: UPF0319 protein YpAngola_A3206 (226 aa).

The first 20 residues, 1 to 20 (MKLGLVAGMLAVCFSFSSVA), serve as a signal peptide directing secretion.

Belongs to the UPF0319 family.

The polypeptide is UPF0319 protein YpAngola_A3206 (Yersinia pestis bv. Antiqua (strain Angola)).